The sequence spans 76 residues: Sec-independent protein translocase protein TatA (76 aa).

The chain crosses the membrane as a helical span at residues 1-21 (MLGGLTGWHLLIILAVILLLF). Over residues 44 to 57 (VNEMKKDGDKDKGE) the composition is skewed to basic and acidic residues. A disordered region spans residues 44 to 76 (VNEMKKDGDKDKGEGGSTAPATDTGASSEQNSK). Positions 62-76 (APATDTGASSEQNSK) are enriched in polar residues.

It belongs to the TatA/E family. As to quaternary structure, the Tat system comprises two distinct complexes: a TatABC complex, containing multiple copies of TatA, TatB and TatC subunits, and a separate TatA complex, containing only TatA subunits. Substrates initially bind to the TatABC complex, which probably triggers association of the separate TatA complex to form the active translocon.

It is found in the cell membrane. Its function is as follows. Part of the twin-arginine translocation (Tat) system that transports large folded proteins containing a characteristic twin-arginine motif in their signal peptide across membranes. TatA could form the protein-conducting channel of the Tat system. The chain is Sec-independent protein translocase protein TatA from Leifsonia xyli subsp. xyli (strain CTCB07).